The chain runs to 477 residues: Probable periplasmic serine endoprotease DegP-like (477 aa).

Positions Met1–Ala27 are cleaved as a signal peptide. Active-site charge relay system residues include His117, Asp147, and Ser220. Residues Gly218–Ser220 and Leu275–Ile279 each bind substrate. 2 PDZ domains span residues Leu264–Gly355 and Asp361–Gly466.

It belongs to the peptidase S1C family.

It localises to the periplasm. It carries out the reaction Acts on substrates that are at least partially unfolded. The cleavage site P1 residue is normally between a pair of hydrophobic residues, such as Val-|-Val.. Its function is as follows. Might be efficient in the degradation of transiently denatured and unfolded proteins which accumulate in the periplasm following stress conditions. The protein is Probable periplasmic serine endoprotease DegP-like of Pseudomonas putida (strain GB-1).